Here is a 103-residue protein sequence, read N- to C-terminus: Small ribosomal subunit protein uS10 (103 aa).

It belongs to the universal ribosomal protein uS10 family. As to quaternary structure, part of the 30S ribosomal subunit.

In terms of biological role, involved in the binding of tRNA to the ribosomes. The protein is Small ribosomal subunit protein uS10 of Alkalilimnicola ehrlichii (strain ATCC BAA-1101 / DSM 17681 / MLHE-1).